Here is a 176-residue protein sequence, read N- to C-terminus: Inner membrane-spanning protein YciB (176 aa).

5 helical membrane passes run 23–43, 50–70, 74–94, 119–139, and 150–170; these read MIAA…FLYW, TMQW…IVLG, FIMW…WGSH, LTYM…FVFT, and MFGS…YLST.

It belongs to the YciB family.

Its subcellular location is the cell inner membrane. Plays a role in cell envelope biogenesis, maintenance of cell envelope integrity and membrane homeostasis. The chain is Inner membrane-spanning protein YciB from Neisseria meningitidis serogroup A / serotype 4A (strain DSM 15465 / Z2491).